Here is a 146-residue protein sequence, read N- to C-terminus: UPF0260 protein VF_1660 (146 aa).

Belongs to the UPF0260 family.

This is UPF0260 protein VF_1660 from Aliivibrio fischeri (strain ATCC 700601 / ES114) (Vibrio fischeri).